We begin with the raw amino-acid sequence, 345 residues long: N-acetyl-gamma-glutamyl-phosphate reductase (345 aa).

The active site involves Cys-149.

This sequence belongs to the NAGSA dehydrogenase family. Type 1 subfamily.

The protein localises to the cytoplasm. The catalysed reaction is N-acetyl-L-glutamate 5-semialdehyde + phosphate + NADP(+) = N-acetyl-L-glutamyl 5-phosphate + NADPH + H(+). Its pathway is amino-acid biosynthesis; L-arginine biosynthesis; N(2)-acetyl-L-ornithine from L-glutamate: step 3/4. Functionally, catalyzes the NADPH-dependent reduction of N-acetyl-5-glutamyl phosphate to yield N-acetyl-L-glutamate 5-semialdehyde. This chain is N-acetyl-gamma-glutamyl-phosphate reductase, found in Geobacillus stearothermophilus (Bacillus stearothermophilus).